An 819-amino-acid polypeptide reads, in one-letter code: ATP-dependent DNA helicase PIF4 (819 aa).

The N-terminal 84 residues, 1–84 (MLLNSTRTLL…RQASSAGHND (84 aa)), are a transit peptide targeting the mitochondrion. A disordered region spans residues 76-101 (QASSAGHNDLGLQEKEKSSGDESAFS). 126–133 (GGAGVGKS) contacts ATP. A DNA-binding region spans residues 734–754 (HIIYVAASRVKKFSQLRMINV).

Belongs to the helicase family. PIF1 subfamily. As to quaternary structure, monomer. Mg(2+) serves as cofactor.

It localises to the mitochondrion matrix. It is found in the kinetoplast. The enzyme catalyses Couples ATP hydrolysis with the unwinding of duplex DNA at the replication fork by translocating in the 5'-3' direction. This creates two antiparallel DNA single strands (ssDNA). The leading ssDNA polymer is the template for DNA polymerase III holoenzyme which synthesizes a continuous strand.. It catalyses the reaction ATP + H2O = ADP + phosphate + H(+). Functionally, DNA-dependent ATPase and 5'-3' DNA helicase required for the maintenance of mitochondrial (kinetoplast) genome stability. The sequence is that of ATP-dependent DNA helicase PIF4 from Trypanosoma brucei brucei (strain 927/4 GUTat10.1).